Here is a 314-residue protein sequence, read N- to C-terminus: Ketimine reductase mu-crystallin (314 aa).

A 3,3',5-triiodo-L-thyronine-binding site is contributed by arginine 47. Serine 91, histidine 92, arginine 119, alanine 144, valine 146, glutamine 147, asparagine 168, arginine 169, threonine 170, asparagine 173, threonine 205, methionine 206, and valine 226 together coordinate NADPH. A 3,3',5-triiodo-L-thyronine-binding site is contributed by glutamate 257. Serine 292 lines the NADPH pocket.

The protein belongs to the ornithine cyclodeaminase/mu-crystallin family. As to quaternary structure, homodimer. Binds the thyroid hormone triiodothyronine (T3); T3 binding inhibits enzymatic activity. In terms of tissue distribution, expressed at high abundance in lens, but outside the lens it is preferentially expressed in neural tissues, retina and brain.

It localises to the cytoplasm. The enzyme catalyses L-pipecolate + NADP(+) = Delta(1)-piperideine-2-carboxylate + NADPH + H(+). It carries out the reaction L-pipecolate + NAD(+) = Delta(1)-piperideine-2-carboxylate + NADH + H(+). It catalyses the reaction L-proline + NADP(+) = 1-pyrroline-2-carboxylate + NADPH + H(+). The catalysed reaction is L-proline + NAD(+) = 1-pyrroline-2-carboxylate + NADH + H(+). The enzyme catalyses (3R)-1,4-thiomorpholine-3-carboxylate + NAD(+) = 3,4-dehydrothiomorpholine-3-carboxylate + NADH + 2 H(+). It carries out the reaction (3R)-1,4-thiomorpholine-3-carboxylate + NADP(+) = 3,4-dehydrothiomorpholine-3-carboxylate + NADPH + 2 H(+). It catalyses the reaction (S)-cystathionine ketimine + NADH + 2 H(+) = (3R,5S)-2,3,5,6,7-pentahydro-1,4-thiazepine-3,5-dicarboxylate + NAD(+). The catalysed reaction is (S)-cystathionine ketimine + NADPH + 2 H(+) = (3R,5S)-2,3,5,6,7-pentahydro-1,4-thiazepine-3,5-dicarboxylate + NADP(+). The enzyme catalyses (R)-lanthionine ketimine + NADPH + 2 H(+) = (3R,5R)-1,4-thiomorpholine-3,5-dicarboxylate + NADP(+). It carries out the reaction Delta(2)-thiazoline-2-carboxylate + NADPH + 2 H(+) = L-thiazolidine-2-carboxylate + NADP(+). In terms of biological role, catalyzes the NAD(P)H-dependent reduction of imine double bonds of a number of cyclic ketimine substrates, including sulfur-containing cyclic ketimines. Under physiological conditions, it efficiently catalyzes delta(1)-piperideine-2-carboxylate (P2C) and delta(1)-pyrroline-2-carboxylate (Pyr2C) reduction, suggesting a central role in lysine and glutamate metabolism. Additional substrates are delta(2)-thiazoline-2-carboxylate (T2C), 3,4-dehydrothiomorpholine-3-carboxylate (AECK), and (R)-lanthionine ketimine (LK) that is reduced at very low rate compared to other substrates. Also catalyzes the NAD(P)H-dependent reduction of (S)-cystathionine ketimine (CysK). This Macropus fuliginosus (Western gray kangaroo) protein is Ketimine reductase mu-crystallin (CRYM).